The primary structure comprises 332 residues: Biotin synthase (332 aa).

The region spanning 53–282 (HFGKKVKLNM…TKEIRISGGR (230 aa)) is the Radical SAM core domain. [4Fe-4S] cluster-binding residues include cysteine 71, cysteine 75, and cysteine 78. [2Fe-2S] cluster-binding residues include cysteine 115, cysteine 147, cysteine 207, and arginine 277.

Belongs to the radical SAM superfamily. Biotin synthase family. Homodimer. It depends on [4Fe-4S] cluster as a cofactor. [2Fe-2S] cluster is required as a cofactor.

It carries out the reaction (4R,5S)-dethiobiotin + (sulfur carrier)-SH + 2 reduced [2Fe-2S]-[ferredoxin] + 2 S-adenosyl-L-methionine = (sulfur carrier)-H + biotin + 2 5'-deoxyadenosine + 2 L-methionine + 2 oxidized [2Fe-2S]-[ferredoxin]. The protein operates within cofactor biosynthesis; biotin biosynthesis; biotin from 7,8-diaminononanoate: step 2/2. Catalyzes the conversion of dethiobiotin (DTB) to biotin by the insertion of a sulfur atom into dethiobiotin via a radical-based mechanism. The protein is Biotin synthase of Bacillus cereus (strain G9842).